Consider the following 131-residue polypeptide: Small ribosomal subunit protein bS6 (131 aa).

Residues 97–131 (TEASPMAKARDERDSRRGPAGERSYDEAHAEEIAE) are disordered. A compositionally biased stretch (basic and acidic residues) spans 104-131 (KARDERDSRRGPAGERSYDEAHAEEIAE).

Belongs to the bacterial ribosomal protein bS6 family.

Functionally, binds together with bS18 to 16S ribosomal RNA. The polypeptide is Small ribosomal subunit protein bS6 (Shewanella baltica (strain OS223)).